The primary structure comprises 187 residues: Keratin-associated protein 5-8 (187 aa).

Repeat copies occupy residues 28-31 (CCVP), 34-37 (CCKP), 40-43 (CCVP), 109-112 (CCKP), 119-122 (CCKP), 138-141 (CCKP), 148-151 (CCKP), 167-170 (CCKP), and 177-180 (CCVP). The tract at residues 28–180 (CCVPICCCKP…CCSQSSCCVP (153 aa)) is 9 X 4 AA repeats of C-C-X-P.

It belongs to the KRTAP type 5 family. In terms of tissue distribution, restricted to hair root, not detected in any other tissues. Expressed in cuticle layers of differentiating hair follicles.

In the hair cortex, hair keratin intermediate filaments are embedded in an interfilamentous matrix, consisting of hair keratin-associated protein (KRTAP), which are essential for the formation of a rigid and resistant hair shaft through their extensive disulfide bond cross-linking with abundant cysteine residues of hair keratins. The matrix proteins include the high-sulfur and high-glycine-tyrosine keratins. The sequence is that of Keratin-associated protein 5-8 (KRTAP5-8) from Homo sapiens (Human).